The primary structure comprises 321 residues: Coproporphyrin III ferrochelatase (321 aa).

Residues histidine 185 and glutamate 267 each contribute to the Fe(2+) site.

This sequence belongs to the ferrochelatase family.

The protein localises to the cytoplasm. It catalyses the reaction Fe-coproporphyrin III + 2 H(+) = coproporphyrin III + Fe(2+). It participates in porphyrin-containing compound metabolism; protoheme biosynthesis. Functionally, involved in coproporphyrin-dependent heme b biosynthesis. Catalyzes the insertion of ferrous iron into coproporphyrin III to form Fe-coproporphyrin III. In Lacticaseibacillus casei (strain BL23) (Lactobacillus casei), this protein is Coproporphyrin III ferrochelatase.